Consider the following 359-residue polypeptide: Histidinol-phosphate aminotransferase (359 aa).

An N6-(pyridoxal phosphate)lysine modification is found at lysine 217.

This sequence belongs to the class-II pyridoxal-phosphate-dependent aminotransferase family. Histidinol-phosphate aminotransferase subfamily. In terms of assembly, homodimer. Pyridoxal 5'-phosphate is required as a cofactor.

It carries out the reaction L-histidinol phosphate + 2-oxoglutarate = 3-(imidazol-4-yl)-2-oxopropyl phosphate + L-glutamate. The protein operates within amino-acid biosynthesis; L-histidine biosynthesis; L-histidine from 5-phospho-alpha-D-ribose 1-diphosphate: step 7/9. The polypeptide is Histidinol-phosphate aminotransferase (Roseobacter denitrificans (strain ATCC 33942 / OCh 114) (Erythrobacter sp. (strain OCh 114))).